The sequence spans 390 residues: Lipid-A-disaccharide synthase (390 aa).

This sequence belongs to the LpxB family.

It carries out the reaction a lipid X + a UDP-2-N,3-O-bis[(3R)-3-hydroxyacyl]-alpha-D-glucosamine = a lipid A disaccharide + UDP + H(+). The protein operates within bacterial outer membrane biogenesis; LPS lipid A biosynthesis. In terms of biological role, condensation of UDP-2,3-diacylglucosamine and 2,3-diacylglucosamine-1-phosphate to form lipid A disaccharide, a precursor of lipid A, a phosphorylated glycolipid that anchors the lipopolysaccharide to the outer membrane of the cell. The sequence is that of Lipid-A-disaccharide synthase from Haemophilus influenzae (strain 86-028NP).